We begin with the raw amino-acid sequence, 212 residues long: ATP-dependent dethiobiotin synthetase BioD (212 aa).

13-18 (GIGKTV) contacts ATP. Residue threonine 17 participates in Mg(2+) binding. The active site involves lysine 33. Serine 37 contributes to the substrate binding site. Position 100 (glutamate 100) interacts with Mg(2+). Residues 100-103 (EGAG), 160-161 (IS), and 184-186 (PLL) contribute to the ATP site.

The protein belongs to the dethiobiotin synthetase family. In terms of assembly, homodimer. The cofactor is Mg(2+).

The protein resides in the cytoplasm. The enzyme catalyses (7R,8S)-7,8-diammoniononanoate + CO2 + ATP = (4R,5S)-dethiobiotin + ADP + phosphate + 3 H(+). The protein operates within cofactor biosynthesis; biotin biosynthesis; biotin from 7,8-diaminononanoate: step 1/2. Catalyzes a mechanistically unusual reaction, the ATP-dependent insertion of CO2 between the N7 and N8 nitrogen atoms of 7,8-diaminopelargonic acid (DAPA, also called 7,8-diammoniononanoate) to form a ureido ring. This chain is ATP-dependent dethiobiotin synthetase BioD, found in Brucella abortus (strain S19).